The sequence spans 558 residues: MLATLRLFLFFLPFFHLHTFADDCPDWAAARASSEVVALQQQIDRWDDAYHREGRSVIADELYDQSRLRLNQWRQCFNLPSPPEPLRTASGPVAHPVAHTGLDKLHDAADIATWLRDRQNVWVQPKVDGVAVTLIYRDGRLHQAISRGDGVRGQDWTASAKKIGAIPQQLTQPQDLLVQGELYWRLNGHMQARAGSANARATVAGLLGRKDLGAEHAAGIGLFVWDWPHGPRDLPERITALTQFGFPTTVPYTQAVASLNDAQHWRDHWYHSPLPFATDGVVLRQSLRPPAERWQARPPYWAVAWKYPFAQALADVRKVHFKIGRTGRITPVLELSPVMLDDRQIKRVSVSSLRRWQELDIRPGDQVAISLAGLTIPRLDSVVLRSTERADLNVPLASDFHALSCWQPTPGCESQFLARLTWLSGKQGLALPHVGRGTWEKLLETGRLNSLLDWLTLDGPELANIAGLGERSSARLLHSFHSARQRPFAQWLKALGLPPTGQATLADSWQALAQRNTEQWQAEAGIGPGRAAQLSAFFRDPQVLTLSETLQAAGVDGF.

Lys126 functions as the N6-AMP-lysine intermediate in the catalytic mechanism.

This sequence belongs to the NAD-dependent DNA ligase family. LigB subfamily.

It carries out the reaction NAD(+) + (deoxyribonucleotide)n-3'-hydroxyl + 5'-phospho-(deoxyribonucleotide)m = (deoxyribonucleotide)n+m + AMP + beta-nicotinamide D-nucleotide.. Its function is as follows. Catalyzes the formation of phosphodiester linkages between 5'-phosphoryl and 3'-hydroxyl groups in double-stranded DNA using NAD as a coenzyme and as the energy source for the reaction. The protein is DNA ligase B of Pseudomonas fluorescens (strain Pf0-1).